The following is a 319-amino-acid chain: MRIVVLAGGIGGARFLRGLQRAAPDADITVIGNTGDDIHLFGLKVCPDLDTVMYTLGGGINEEQGWGRADETFHLKEELAAYGVGPEWFGLGDRDFATHIVRTQMLGAGYPLSAVTQALCDRWKPGVRLIPMSDDRIETHVAVDMDGERKAVHFQEYWVRLRASVPAVAVVPVGAEQAKPAPGVLEAIAEADVVLFPPSNPVVSVGTILAVPGIREAIAEAGVPVVGLSPIVGDAPVRGMADKVLAAVGVESTAAAVAEHYGSGLLDGWLVDTVDASVVERVEAAGIRCRAVPLMMTDLDATAQMAREALALAEEVRTP.

Residue D50 participates in 7,8-didemethyl-8-hydroxy-5-deazariboflavin binding.

It belongs to the CofD family. As to quaternary structure, homodimer. The cofactor is Mg(2+).

The enzyme catalyses enolpyruvoyl-2-diphospho-5'-guanosine + 7,8-didemethyl-8-hydroxy-5-deazariboflavin = dehydro coenzyme F420-0 + GMP + H(+). It participates in cofactor biosynthesis; coenzyme F420 biosynthesis. Catalyzes the transfer of the phosphoenolpyruvate moiety from enoylpyruvoyl-2-diphospho-5'-guanosine (EPPG) to 7,8-didemethyl-8-hydroxy-5-deazariboflavin (FO) with the formation of dehydro coenzyme F420-0 and GMP. The sequence is that of Phosphoenolpyruvate transferase from Streptomyces avermitilis (strain ATCC 31267 / DSM 46492 / JCM 5070 / NBRC 14893 / NCIMB 12804 / NRRL 8165 / MA-4680).